Reading from the N-terminus, the 416-residue chain is Isobutyryl-CoA dehydrogenase, mitochondrial (416 aa).

A mitochondrion-targeting transit peptide spans 1–21 (MISGLFKLSNKQSVLQNATKL). FAD is bound by residues 156–165 (YCLTEPGSGS) and 189–191 (FIS). Ser165 contributes to the substrate binding site. 273 to 276 (NGGR) is a binding site for substrate. Residues Arg301, 311 to 312 (FQ), and 370 to 374 (QLFGG) contribute to the FAD site. Glu397 acts as the Proton acceptor in catalysis. FAD is bound at residue 399 to 401 (SDA). Arg409 contributes to the substrate binding site.

This sequence belongs to the acyl-CoA dehydrogenase family. Homotetramer. The cofactor is FAD.

It is found in the mitochondrion. It carries out the reaction 2-methylpropanoyl-CoA + oxidized [electron-transfer flavoprotein] + H(+) = 2-methylpropenoyl-CoA + reduced [electron-transfer flavoprotein]. The enzyme catalyses (2S)-2-methylbutanoyl-CoA + oxidized [electron-transfer flavoprotein] + H(+) = (2E)-2-methylbut-2-enoyl-CoA + reduced [electron-transfer flavoprotein]. The catalysed reaction is propanoyl-CoA + oxidized [electron-transfer flavoprotein] + H(+) = acryloyl-CoA + reduced [electron-transfer flavoprotein]. Its pathway is amino-acid degradation; L-valine degradation. Its function is as follows. Isobutyryl-CoA dehydrogenase which catalyzes one of the steps of the valine catabolic pathway. To a lesser extent, is also able to catalyze the oxidation of (2S)-2-methylbutanoyl-CoA. The protein is Isobutyryl-CoA dehydrogenase, mitochondrial (acad8) of Dictyostelium discoideum (Social amoeba).